The chain runs to 905 residues: TRPM8 channel-associated factor homolog (905 aa).

Positions 524–823 constitute a Peptidase M60 domain; sequence NAWRSTGLYL…TYLQLQEGFG (300 aa).

It belongs to the TCAF family.

In terms of biological role, may play a role in the regulation of the cation channel TRPM8 activity. The polypeptide is TRPM8 channel-associated factor homolog (tcaf) (Xenopus laevis (African clawed frog)).